Here is a 733-residue protein sequence, read N- to C-terminus: Centrosomal protein of 68 kDa (733 aa).

Over residues 71-80 (SKEPVADRSK) the composition is skewed to basic and acidic residues. Disordered regions lie at residues 71-92 (SKEP…SASV), 150-207 (GLSQ…SFAN), and 222-244 (VVGA…DATG). Residues 178-190 (SSRSISASSVGSS) are compositionally biased toward low complexity. Over residues 231-241 (GSAQPLTSGSD) the composition is skewed to polar residues. Phosphoserine is present on S315. Residues 420 to 442 (PQLKTKEKEPPFPRQKRGRQHVS) are disordered. Phosphoserine is present on residues S453 and S459. Residues 497–571 (HSSLQVSDSD…KPLKTQPASK (75 aa)) are disordered. The segment covering 540–569 (IQPQDSRGKSSLMSNQTLGVSSKPLKTQPA) has biased composition (polar residues).

Interacts with CNTLN; the interaction recruits CEP68 to the centrosome. Interacts with the SCF(FBXW11) complex which contains SKP1, CUL1 and FBXW11; the interaction is probably mediated by FBXW11 and the complex also contains CDK5RAP2 and PCNT. Also interacts with F-box protein BTRC. Interacts with serine/threonine-protein kinase PLK1; the interaction leads to phosphorylation of CEP68 and its subsequent degradation. Interacts with NEK2; the interaction leads to phosphorylation of CEP68. Phosphorylation by PLK1 is required for binding to BTRC in prometaphase. Phosphorylated directly or indirectly by NEK2. NEK2-mediated phosphorylation promotes CEP68 dissociation from the centrosome and its degradation at the onset of mitosis. Post-translationally, ubiquitinated and targeted for proteasomal degradation in early mitosis by the SCF(BTRC) and/or SCF(FBXW11) E3 ubiquitin-protein ligase complexes. Degradation is complete by prometaphase and is required for removal of CDK5RAP2 from the peripheral pericentriolar material and subsequent centriole separation.

The protein resides in the cytoplasm. It localises to the cytoskeleton. Its subcellular location is the microtubule organizing center. The protein localises to the centrosome. In terms of biological role, involved in maintenance of centrosome cohesion, probably as part of a linker structure which prevents centrosome splitting. Required for localization of CDK5RAP2 to the centrosome during interphase. Contributes to CROCC/rootletin filament formation. This chain is Centrosomal protein of 68 kDa (Cep68), found in Mus musculus (Mouse).